The sequence spans 339 residues: Homeobox protein DBX2 (339 aa).

The homeobox DNA-binding region spans 186–245 (GILRRAVFSEDQRKALEKMFQKQKYISKTDRKKLAINLGLKESQVKIWFQNRRMKWRNSK). The tract at residues 282–318 (VPQQHSSPRWRENSPEPSERLIQESSGAPPPEANSLQ) is disordered. Residues 290-303 (RWRENSPEPSERLI) are compositionally biased toward basic and acidic residues.

Belongs to the H2.0 homeobox family.

The protein localises to the nucleus. The protein is Homeobox protein DBX2 (DBX2) of Homo sapiens (Human).